Here is a 110-residue protein sequence, read N- to C-terminus: Nucleoid-associated protein YE3092 (110 aa).

Belongs to the YbaB/EbfC family. As to quaternary structure, homodimer.

It localises to the cytoplasm. The protein localises to the nucleoid. Functionally, binds to DNA and alters its conformation. May be involved in regulation of gene expression, nucleoid organization and DNA protection. The polypeptide is Nucleoid-associated protein YE3092 (Yersinia enterocolitica serotype O:8 / biotype 1B (strain NCTC 13174 / 8081)).